Consider the following 1217-residue polypeptide: MFLYNLTLQRATGISFAIHGNFSGTKQQEIVVSRGKILELLRPDPNTGKVHTLLTVEVFGVIRSLMAFRLTGGTKDYIVVGSDSGRIVILEYQPSKNMFEKIHQETFGKSGCRRIVPGQFLAVDPKGRAVMISAIEKQKLVYILNRDAAARLTISSPLEAHKANTLVYHVVGVDVGFENPMFACLEMDYEEADNDPTGEAAANTQQTLTFYELDLGLNHVVRKYSEPLEEHGNFLITVPGGSDGPSGVLICSENYITYKNFGDQPDIRCPIPRRRNDLDDPERGMIFVCSATHKTKSMFFFLAQTEQGDIFKITLETDEDMVTEIRLKYFDTVPVAAAMCVLKTGFLFVASEFGNHYLYQIAHLGDDDEEPEFSSAMPLEEGDTFFFQPRPLKNLVLVDELDSLSPILFCQIADLANEDTPQLYVACGRGPRSSLRVLRHGLEVSETAVSELPGNPNAVWTVRRHIEDEFDAYIIVSFVNATLVLSIGETVEEVTDSGFLGTTPTLSCSLLGDDALVQVYPDGIRHIRADKRVNEWKTPGKKTIVKCAVNQRQVVIALTGGELVYFEMDPSGQLNEYTERKEMSADVVCMSLANVPPGEQRSRFLAVGLVDNTVRIISLDPSDCLQPLSMQALPAQPESLCIVEMGGTEKQDELGERGSIGFLYLNIGLQNGVLLRTVLDPVTGDLSDTRTRYLGSRPVKLFRVRMQGQEAVLAMSSRSWLSYSYQSRFHLTPLSYETLEFASGFASEQCPEGIVAISTNTLRILALEKLGAVFNQVAFPLQYTPRKFVIHPESNNLIIIETDHNAYTEATKAQRKQQMAEEMVEAAGEDERELAAEMAAAFLNENLPESIFGAPKAGSGQWASVIRVMNPIQGNTLDLVQLEQNEAAFSVAVCRFSNTGEDWYVLVGVAKDLILNPRSVAGGFVYTYKLVNNGEKLEFLHKTPVEEVPAAIAPFQGRVLIGVGKLLRVYDLGKKKLLRKCENKHIANYISGIQTIGHRVIVSDVQESFIWVRYKRNENQLIIFADDTYPRWVTTASLLDYDTVAGADKFGNICVVRLPPNTNDEVDEDPTGNKALRDRGLLNGASQKAEVIMNYHVGETVLSLQKTTLIPGGSESLVYTTLSGGIGILVPFTSHEDHDFFQHVEMHLRSEHPPLCGRDHLSFRSYYFPVKNVIDGDLCEQFNSMEPNKQKNVSEELDRTPPEVTKKLEDIRTRYAF.

2 interaction with PHF5A, SF3B1 and SF3B5 regions span residues 105 to 119 (ETFG…VPGQ) and 145 to 168 (NRDA…TLVY). A Phosphoserine modification is found at S156. Interaction with SF3B1 and SF3B5 regions lie at residues 193 to 231 (DNDP…LEEH) and 786 to 804 (RKFV…ETDH). An interaction with SF3B1 region spans residues 1028–1049 (TYPRWVTTASLLDYDTVAGADK). The interval 1100–1123 (TVLSLQKTTLIPGGSESLVYTTLS) is interaction with SF3B5. Position 1200 is a phosphothreonine (T1200).

It belongs to the RSE1 family. In terms of assembly, component of the 17S U2 SnRNP complex, a ribonucleoprotein complex that contains small nuclear RNA (snRNA) U2 and a number of specific proteins. Part of the SF3B subcomplex of the 17S U2 SnRNP complex. SF3B associates with the splicing subcomplex SF3A and a 12S RNA unit to form the U2 small nuclear ribonucleoproteins complex (U2 snRNP). Within the SF3B subcomplex, interacts directly with SF3B1 (via HEAT domain), SF3B5 and PHF5A. Identified in the spliceosome A complex; remains associated with the spliceosome throughout the splicing process. Component of the spliceosome B complex. Identified in the spliceosome C complex. Identified in the spliceosome E complex. Component of the minor (U12-type spliceosome) spliceosome. Within this complex, interacts with SCNM1. Associates with the STAGA transcription coactivator-HAT complex. Interacts with SUPT3H. Interacts with TAF3.

The protein localises to the nucleus. Component of the 17S U2 SnRNP complex of the spliceosome, a large ribonucleoprotein complex that removes introns from transcribed pre-mRNAs. The 17S U2 SnRNP complex (1) directly participates in early spliceosome assembly and (2) mediates recognition of the intron branch site during pre-mRNA splicing by promoting the selection of the pre-mRNA branch-site adenosine, the nucleophile for the first step of splicing. Within the 17S U2 SnRNP complex, SF3B3 is part of the SF3B subcomplex, which is required for 'A' complex assembly formed by the stable binding of U2 snRNP to the branchpoint sequence in pre-mRNA. Sequence independent binding of SF3A and SF3B subcomplexes upstream of the branch site is essential, it may anchor U2 snRNP to the pre-mRNA. May also be involved in the assembly of the 'E' complex. Also acts as a component of the minor spliceosome, which is involved in the splicing of U12-type introns in pre-mRNAs. This is Splicing factor 3B subunit 3 (SF3B3) from Pongo abelii (Sumatran orangutan).